A 227-amino-acid chain; its full sequence is 2-C-methyl-D-erythritol 4-phosphate cytidylyltransferase (227 aa).

This sequence belongs to the IspD/TarI cytidylyltransferase family. IspD subfamily.

It catalyses the reaction 2-C-methyl-D-erythritol 4-phosphate + CTP + H(+) = 4-CDP-2-C-methyl-D-erythritol + diphosphate. It functions in the pathway isoprenoid biosynthesis; isopentenyl diphosphate biosynthesis via DXP pathway; isopentenyl diphosphate from 1-deoxy-D-xylulose 5-phosphate: step 2/6. Catalyzes the formation of 4-diphosphocytidyl-2-C-methyl-D-erythritol from CTP and 2-C-methyl-D-erythritol 4-phosphate (MEP). The sequence is that of 2-C-methyl-D-erythritol 4-phosphate cytidylyltransferase from Tolumonas auensis (strain DSM 9187 / NBRC 110442 / TA 4).